A 270-amino-acid chain; its full sequence is Undecaprenyl-diphosphatase (270 aa).

Helical transmembrane passes span 3–23 (TIVT…LPVS), 42–62 (WAMF…VQYW), 86–106 (LLAA…YIDV), 108–128 (LGSP…ILVI), 184–204 (AEFS…LELL), 217–237 (VGWS…LAVI), and 249–269 (FKPF…WLAM).

The protein belongs to the UppP family.

It is found in the cell inner membrane. The enzyme catalyses di-trans,octa-cis-undecaprenyl diphosphate + H2O = di-trans,octa-cis-undecaprenyl phosphate + phosphate + H(+). Its function is as follows. Catalyzes the dephosphorylation of undecaprenyl diphosphate (UPP). Confers resistance to bacitracin. The chain is Undecaprenyl-diphosphatase from Novosphingobium aromaticivorans (strain ATCC 700278 / DSM 12444 / CCUG 56034 / CIP 105152 / NBRC 16084 / F199).